Here is a 527-residue protein sequence, read N- to C-terminus: MNISIFLIGFVFFMGGISVWLMPTFKLGIFFLEWDFLSLKFNFYFNSILFSFILFLVTFSVLVFSTYYLNSELNFNYYYFVLLIFVGSMFSLNFSNSIFTMLLSWDLLGISSFFLVLFYNNWDSCSGAMNTALTNRLGDYFMFVFFGLSVFSGYYFLSFSMFSSYMSLLLLLTAFTKSAQFPFSSWLPKAMSAPTPVSSLVHSSTLVTAGLILLMNFNNLVMQKDFISFVLIIGLFTMFFSSLASLVEEDLKKVVALSTLSQMGFSMVTLGLGLSFISFIHLVSHALFKSCLFMQVGYIIHCSFGQQDGRNYSNNGNLPNFIQLQMLVTLFCLCGLIFSSGAVSKDFILELFFSNNYMMFFSLMFFVSVFLTFGYSFRLWKSFFLSFNKVMNHYSSTVFMNFLSLVLVIFSISFLWWMNFNLLNIPSLFLYVDFFGPLVFLFMMIFLSFLILKMLFKELMYKFLVDYLAKNSIYKMKNLKFMDLFLNNINSKGYTLFLSSGMFKNYYLKSLNFNSVVVLIFIFFMIC.

14 consecutive transmembrane segments (helical) span residues 3 to 23 (ISIFLIGFVFFMGGISVWLMP), 43 to 63 (FYFNSILFSFILFLVTFSVLV), 75 to 95 (FNYYYFVLLIFVGSMFSLNFS), 98 to 118 (IFTMLLSWDLLGISSFFLVLF), 141 to 161 (FMFVFFGLSVFSGYYFLSFSM), 168 to 188 (LLLLLTAFTKSAQFPFSSWLP), 197 to 217 (VSSLVHSSTLVTAGLILLMNF), 226 to 246 (FISFVLIIGLFTMFFSSLASL), 263 to 283 (MGFSMVTLGLGLSFISFIHLV), 318 to 338 (LPNFIQLQMLVTLFCLCGLIF), 357 to 377 (YMMFFSLMFFVSVFLTFGYSF), 398 to 418 (VFMNFLSLVLVIFSISFLWWM), 432 to 452 (VDFFGPLVFLFMMIFLSFLIL), and 507 to 527 (YLKSLNFNSVVVLIFIFFMIC).

It belongs to the complex I subunit 5 family.

It localises to the mitochondrion inner membrane. It catalyses the reaction a ubiquinone + NADH + 5 H(+)(in) = a ubiquinol + NAD(+) + 4 H(+)(out). Its function is as follows. Core subunit of the mitochondrial membrane respiratory chain NADH dehydrogenase (Complex I) that is believed to belong to the minimal assembly required for catalysis. Complex I functions in the transfer of electrons from NADH to the respiratory chain. The immediate electron acceptor for the enzyme is believed to be ubiquinone. This chain is NADH-ubiquinone oxidoreductase chain 5, found in Caenorhabditis elegans.